The sequence spans 79 residues: Probable [Fe-S]-dependent transcriptional repressor (79 aa).

Iron-sulfur cluster is bound by residues cysteine 56, cysteine 61, cysteine 64, and cysteine 71.

The protein belongs to the FeoC family.

In terms of biological role, may function as a transcriptional regulator that controls feoABC expression. This chain is Probable [Fe-S]-dependent transcriptional repressor, found in Klebsiella pneumoniae subsp. pneumoniae (strain ATCC 700721 / MGH 78578).